Here is a 666-residue protein sequence, read N- to C-terminus: Protein SLY1 (666 aa).

4 consecutive repeat copies span residues 106-142 (KENI…DLAQ), 220-257 (KGGP…DSLE), 436-474 (LDIL…QNVE), and 478-514 (KEND…DGSD). Positions 106-514 (KENIDIIVND…QNKSLEDGSD (409 aa)) are 4 X approximate repeats.

The protein belongs to the STXBP/unc-18/SEC1 family. As to quaternary structure, interacts with SED5.

It localises to the cytoplasm. The protein resides in the membrane. Able to suppress the functional loss of YPT1. SLY1 is essential for cell viability. May interact indirectly, or directly with YPT1. In Saccharomyces cerevisiae (strain ATCC 204508 / S288c) (Baker's yeast), this protein is Protein SLY1 (SLY1).